The following is a 309-amino-acid chain: MTRSFLDLADAGAAGVRLMLDEAVSRKKARAGLPKGAPDRDAPLAGHTLAMIFEKNSTRTRVSFDMAMRQLGGTTIVMDAGSMQLGRGETIADTARVLSRYVDAIMIRTDDHRKAVDLARYADVPVINGLTDRSHPCQIMADLQTILEHKGRVEGLGWAWLGDGNNVLHSIVEAGSLLGFPVRIGCPEGYDPDAEVLAEARARGGDILLSRDPAEVVRGADVVVTDTWISMGQAHAEEKLAAMMPFQVDEARMAQAAPDAAFLHCLPAHRGEEVVDAVIDGPHSLIWDEAENRLHAQKAVLLWCLGRLG.

Carbamoyl phosphate contacts are provided by residues 57-60, Q84, R108, and 135-138; these read STRT and HPCQ. Residues N166, D226, and 230–231 contribute to the L-ornithine site; that span reads SM. Carbamoyl phosphate-binding positions include 265-266 and R293; that span reads CL.

It belongs to the aspartate/ornithine carbamoyltransferase superfamily. OTCase family.

The protein resides in the cytoplasm. It carries out the reaction carbamoyl phosphate + L-ornithine = L-citrulline + phosphate + H(+). Its pathway is amino-acid biosynthesis; L-arginine biosynthesis; L-arginine from L-ornithine and carbamoyl phosphate: step 1/3. In terms of biological role, reversibly catalyzes the transfer of the carbamoyl group from carbamoyl phosphate (CP) to the N(epsilon) atom of ornithine (ORN) to produce L-citrulline. The protein is Ornithine carbamoyltransferase of Rhizorhabdus wittichii (strain DSM 6014 / CCUG 31198 / JCM 15750 / NBRC 105917 / EY 4224 / RW1) (Sphingomonas wittichii).